The following is a 34-amino-acid chain: Omega-ctenitoxin-Pn2a (34 aa).

3 disulfides stabilise this stretch: cysteine 2–cysteine 16, cysteine 9–cysteine 26, and cysteine 15–cysteine 28.

Belongs to the neurotoxin 02 (plectoxin) family. 01 (Tx3) subfamily. In terms of tissue distribution, expressed by the venom gland.

The protein resides in the secreted. In terms of biological role, inhibits all known high-voltage activated calcium channels (L-, P/Q- and R-type currents) (Cav), and most effectively the P/Q- (Cav2.1/CACNA1A) and R-type (Cav2.3/CACNA1E) currents. In rat brain, inhibits glutamate release, neuronal death and loss of neurotransmission in the hippocampus resulting from ischemia. In vivo, induces rapid general flaccid paralysis followed by death in 10-30 minutes at dose levels of 5 ug per mouse. In Phoneutria nigriventer (Brazilian armed spider), this protein is Omega-ctenitoxin-Pn2a.